The chain runs to 94 residues: Putative pterin-4-alpha-carbinolamine dehydratase (94 aa).

This sequence belongs to the pterin-4-alpha-carbinolamine dehydratase family.

The catalysed reaction is (4aS,6R)-4a-hydroxy-L-erythro-5,6,7,8-tetrahydrobiopterin = (6R)-L-erythro-6,7-dihydrobiopterin + H2O. The sequence is that of Putative pterin-4-alpha-carbinolamine dehydratase from Mycobacterium sp. (strain KMS).